A 181-amino-acid polypeptide reads, in one-letter code: Probable nicotinate-nucleotide adenylyltransferase (181 aa).

Belongs to the NadD family.

It carries out the reaction nicotinate beta-D-ribonucleotide + ATP + H(+) = deamido-NAD(+) + diphosphate. It functions in the pathway cofactor biosynthesis; NAD(+) biosynthesis; deamido-NAD(+) from nicotinate D-ribonucleotide: step 1/1. Its function is as follows. Catalyzes the reversible adenylation of nicotinate mononucleotide (NaMN) to nicotinic acid adenine dinucleotide (NaAD). The chain is Probable nicotinate-nucleotide adenylyltransferase from Campylobacter fetus subsp. fetus (strain 82-40).